We begin with the raw amino-acid sequence, 72 residues long: Translation initiation factor IF-1 (72 aa).

Residues 1–72 enclose the S1-like domain; sequence MAKEDCIEME…TKGRIKFRSK (72 aa).

The protein belongs to the IF-1 family. In terms of assembly, component of the 30S ribosomal translation pre-initiation complex which assembles on the 30S ribosome in the order IF-2 and IF-3, IF-1 and N-formylmethionyl-tRNA(fMet); mRNA recruitment can occur at any time during PIC assembly.

It localises to the cytoplasm. In terms of biological role, one of the essential components for the initiation of protein synthesis. Stabilizes the binding of IF-2 and IF-3 on the 30S subunit to which N-formylmethionyl-tRNA(fMet) subsequently binds. Helps modulate mRNA selection, yielding the 30S pre-initiation complex (PIC). Upon addition of the 50S ribosomal subunit IF-1, IF-2 and IF-3 are released leaving the mature 70S translation initiation complex. In Francisella tularensis subsp. tularensis (strain FSC 198), this protein is Translation initiation factor IF-1.